Reading from the N-terminus, the 172-residue chain is Peptide methionine sulfoxide reductase MsrA 1 (172 aa).

Cys-14 is a catalytic residue.

It belongs to the MsrA Met sulfoxide reductase family.

The catalysed reaction is L-methionyl-[protein] + [thioredoxin]-disulfide + H2O = L-methionyl-(S)-S-oxide-[protein] + [thioredoxin]-dithiol. It carries out the reaction [thioredoxin]-disulfide + L-methionine + H2O = L-methionine (S)-S-oxide + [thioredoxin]-dithiol. Functionally, has an important function as a repair enzyme for proteins that have been inactivated by oxidation. Catalyzes the reversible oxidation-reduction of methionine sulfoxide in proteins to methionine. The protein is Peptide methionine sulfoxide reductase MsrA 1 (msrA1) of Mesorhizobium japonicum (strain LMG 29417 / CECT 9101 / MAFF 303099) (Mesorhizobium loti (strain MAFF 303099)).